The primary structure comprises 347 residues: NADH-ubiquinone oxidoreductase chain 2 (347 aa).

The next 11 helical transmembrane spans lie at proline 3 to serine 23, histidine 25 to methionine 45, alanine 66 to valine 86, methionine 96 to proline 116, isoleucine 122 to leucine 142, isoleucine 145 to glycine 165, isoleucine 178 to proline 198, methionine 200 to methionine 220, methionine 237 to leucine 257, asparagine 274 to methionine 294, and leucine 325 to isoleucine 345.

It belongs to the complex I subunit 2 family. In terms of assembly, core subunit of respiratory chain NADH dehydrogenase (Complex I) which is composed of 45 different subunits. Interacts with TMEM242.

Its subcellular location is the mitochondrion inner membrane. The enzyme catalyses a ubiquinone + NADH + 5 H(+)(in) = a ubiquinol + NAD(+) + 4 H(+)(out). In terms of biological role, core subunit of the mitochondrial membrane respiratory chain NADH dehydrogenase (Complex I) which catalyzes electron transfer from NADH through the respiratory chain, using ubiquinone as an electron acceptor. Essential for the catalytic activity and assembly of complex I. The sequence is that of NADH-ubiquinone oxidoreductase chain 2 from Capra hircus (Goat).